Reading from the N-terminus, the 393-residue chain is Probable N-acetyl-LL-diaminopimelate aminotransferase (393 aa).

Position 231 is an N6-(pyridoxal phosphate)lysine (Lys-231).

This sequence belongs to the class-I pyridoxal-phosphate-dependent aminotransferase family. Homodimer. Pyridoxal 5'-phosphate is required as a cofactor.

The protein resides in the cytoplasm. It catalyses the reaction N-acetyl-(2S,6S)-2,6-diaminopimelate + 2-oxoglutarate = L-2-acetamido-6-oxoheptanedioate + L-glutamate. Its pathway is amino-acid biosynthesis; L-lysine biosynthesis via DAP pathway; LL-2,6-diaminopimelate from (S)-tetrahydrodipicolinate (acetylase route): step 2/3. Essential for murein biosynthesis. Probably catalyzes the conversion of L-2-acetamido-6-oxopimelate to N-acetyl-LL-2,6-diaminopimelate. The protein is Probable N-acetyl-LL-diaminopimelate aminotransferase of Bacillus subtilis (strain 168).